The chain runs to 481 residues: Amino acid permease 6 (481 aa).

Residues 1–36 (MEKKKSMFVEQSFPEHEIGDTNKNFDEDGRDKRTGT) lie on the Cytoplasmic side of the membrane. The next 2 membrane-spanning stretches (helical) occupy residues 37–57 (WMTGSAHIITAVIGSGVLSLA) and 58–78 (WAIAQLGWVAGPAVLMAFSFI). The Cytoplasmic portion of the chain corresponds to 79–125 (TYFTSTMLADCYRSPDPVTGKRNYTYMEVVRSYLGGRKVQLCGLAQY). A helical transmembrane segment spans residues 126–146 (GNLIGITIGYTITASISMVAV). The Extracellular segment spans residues 147-167 (KRSNCFHKNGHNVKCATSNTP). Residues 168–188 (FMIIFAIIQIILSQIPNFHNL) traverse the membrane as a helical segment. The Cytoplasmic segment spans residues 189–190 (SW). A helical membrane pass occupies residues 191-211 (LSILAAVMSFCYASIGVGLSI). The Extracellular segment spans residues 212 to 242 (AKAAGGGEHVRTTLTGVTVGIDVSGAEKIWR). The helical transmembrane segment at 243 to 263 (TFQAIGDIAFAYAYSTVLIEI) threads the bilayer. Residues 264–283 (QDTLKAGPPSENKAMKRASL) lie on the Cytoplasmic side of the membrane. A helical transmembrane segment spans residues 284–304 (VGVSTTTFFYMLCGCVGYAAF). Over 305-321 (GNDAPGNFLTGFGFYEP) the chain is Extracellular. The helical transmembrane segment at 322–342 (FWLIDFANVCIAVHLIGAYQV) threads the bilayer. Residues 343–385 (FCQPIFQFVESQSAKRWPDNKFITGEYKIHVPCCGDFSINFLR) lie on the Cytoplasmic side of the membrane. The chain crosses the membrane as a helical span at residues 386–405 (LVWRTSYVVVTAVVAMIFPF). The Extracellular segment spans residues 406 to 408 (FND). A helical transmembrane segment spans residues 409–427 (FLGLIGAASFWPLTVYFPI). At 428 to 447 (EMHIAQKKIPKFSFTWTWLK) the chain is on the cytoplasmic side. A helical membrane pass occupies residues 448-468 (ILSWTCFIVSLVAAAGSVQGL). Over 469 to 481 (IQSLKDFKPFQAP) the chain is Extracellular.

The protein belongs to the amino acid/polyamine transporter 2 family. Amino acid/auxin permease (AAAP) (TC 2.A.18.2) subfamily. As to expression, expressed in roots and leaves, and at lower levels in stems and flowers. Found in the xylem parenchyma.

It is found in the cell membrane. In terms of biological role, amino acid-proton symporter. Stereospecific transporter with a broad specificity for tryptophan, proline, and neutral and acidic amino acids. Has an affinity for aspartate in a physiological range. Involved in the uptake of amino acids diffusing out of the xylem tracheids into the xylem parenchyma. The polypeptide is Amino acid permease 6 (AAP6) (Arabidopsis thaliana (Mouse-ear cress)).